The following is a 243-amino-acid chain: MAGHSKWANIQHRKGRQDAKRGKLWTKIIREITVAARAGGADPDSNPRLRMAWDKATDANMPKDNIQRAIQRGAGGADGESYEEVRYEGYGIGGAAVIVDCMTDNRTRTVAEVRHAFAKHGGNLGQEGSVAFMFKHCGQFVFAPGTSEEAVMEAALEAGAEDIATDEEGVIEVVCAPADFTAVRQAFEAAGLKAEVDGVVMKALNETELTGEDAVKMQKLLDVLESLDDVQEVYTNVVFDEAQ.

The interval 1-21 (MAGHSKWANIQHRKGRQDAKR) is disordered.

Belongs to the TACO1 family.

It localises to the cytoplasm. The polypeptide is Probable transcriptional regulatory protein BPP2422 (Bordetella parapertussis (strain 12822 / ATCC BAA-587 / NCTC 13253)).